A 602-amino-acid polypeptide reads, in one-letter code: Elongation factor 4 (602 aa).

The region spanning 2 to 184 (KKIRNFAIIA…RIVRDIPPPK (183 aa)) is the tr-type G domain. Residues 14 to 19 (DHGKST) and 131 to 134 (NKID) each bind GTP.

Belongs to the TRAFAC class translation factor GTPase superfamily. Classic translation factor GTPase family. LepA subfamily.

It localises to the cell membrane. It carries out the reaction GTP + H2O = GDP + phosphate + H(+). Required for accurate and efficient protein synthesis under certain stress conditions. May act as a fidelity factor of the translation reaction, by catalyzing a one-codon backward translocation of tRNAs on improperly translocated ribosomes. Back-translocation proceeds from a post-translocation (POST) complex to a pre-translocation (PRE) complex, thus giving elongation factor G a second chance to translocate the tRNAs correctly. Binds to ribosomes in a GTP-dependent manner. The protein is Elongation factor 4 of Baumannia cicadellinicola subsp. Homalodisca coagulata.